Consider the following 390-residue polypeptide: Cell adhesion molecule 4 (390 aa).

Positions 1–27 (MAPALTALNRCFVLGILLLVTAGTAFS) are cleaved as a signal peptide. Positions 28-122 (QEVQAENVTV…DTHHQIATLT (95 aa)) constitute an Ig-like V-type domain. The Extracellular segment spans residues 28–326 (QEVQAENVTV…IEAQTQVPYA (299 aa)). N34 and N70 each carry an N-linked (GlcNAc...) asparagine glycan. 3 disulfides stabilise this stretch: C47–C107, C148–C202, and C247–C293. Ig-like C2-type domains lie at 127 to 219 (PDNP…TQYE) and 226 to 309 (PTAS…YVLV). Residues N264 and N288 are each glycosylated (N-linked (GlcNAc...) asparagine). A helical membrane pass occupies residues 327 to 347 (VIGGILALLVFLVICILIVMV). Topologically, residues 348-390 (WCSVRQKGSYLTHEASGLDEHGEAREAFLNGGENHKRKEEFFI) are cytoplasmic.

Belongs to the nectin family.

The protein localises to the membrane. Functionally, involved in the cell-cell adhesion. The chain is Cell adhesion molecule 4 (cadm4) from Xenopus laevis (African clawed frog).